Reading from the N-terminus, the 527-residue chain is Tyrosine-protein kinase TXK (527 aa).

The segment at 58 to 81 is disordered; it reads TQSNRGGVQPSKRKPLPPLPQEPP. One can recognise an SH3 domain in the interval 82-142; that stretch reads DERIQVKALY…PSNYVTENRL (61 aa). Residue tyrosine 91 is modified to Phosphotyrosine; by autocatalysis. The 97-residue stretch at 150 to 246 folds into the SH2 domain; the sequence is WYHKNITRNQ…GLISRLRYPI (97 aa). The Protein kinase domain maps to 271 to 527; sequence LAFVKEIGSG…QVLTEIAETW (257 aa). ATP-binding positions include 277 to 285 and lysine 299; that span reads IGSGQFGVV. The active-site Proton acceptor is aspartate 390. Tyrosine 420 is modified (phosphotyrosine; by FYN and autocatalysis).

This sequence belongs to the protein kinase superfamily. Tyr protein kinase family. TEC subfamily. As to quaternary structure, interacts with PARP1 and EEF1A1. Interacts with SH2D2A. Interacts with FYN. Post-translationally, phosphorylated at Tyr-420 by FYN. Autophosphorylation at Tyr-91 is critical for the activation of TXK, leading to the up-regulation of IFN-gamma gene transcription. The cysteine string at the N-terminus is palmitoylated and required for the proper subcellular location. In terms of tissue distribution, expressed in early thymocytes, T-cells and mast cells.

The protein localises to the cytoplasm. It is found in the nucleus. It localises to the cell membrane. It carries out the reaction L-tyrosyl-[protein] + ATP = O-phospho-L-tyrosyl-[protein] + ADP + H(+). Its activity is regulated as follows. Activated by phosphorylation by FYN. Functionally, non-receptor tyrosine kinase that plays a redundant role with ITK in regulation of the adaptive immune response. Regulates the development, function and differentiation of conventional T-cells and nonconventional NKT-cells. When antigen presenting cells (APC) activate T-cell receptor (TCR), a series of phosphorylation leads to the recruitment of TXK to the cell membrane, where it is phosphorylated at Tyr-420. Phosphorylation leads to TXK full activation. Also contributes to signaling from many receptors and participates in multiple downstream pathways, including regulation of the actin cytoskeleton. Like ITK, can phosphorylate PLCG1, leading to its localization in lipid rafts and activation, followed by subsequent cleavage of its substrates. In turn, the endoplasmic reticulum releases calcium in the cytoplasm and the nuclear activator of activated T-cells (NFAT) translocates into the nucleus to perform its transcriptional duty. Plays a role in the positive regulation of IFNG transcription in T-helper 1 cells as part of an IFNG promoter-binding complex with PARP1 and EEF1A1. Within the complex, phosphorylates both PARP1 and EEF1A1. Also phosphorylates key sites in LCP2 leading to the up-regulation of Th1 preferred cytokine IL-2. Phosphorylates 'Tyr-201' of CTLA4 which leads to the association of PI-3 kinase with the CTLA4 receptor. This is Tyrosine-protein kinase TXK (Txk) from Mus musculus (Mouse).